Reading from the N-terminus, the 397-residue chain is Elongation factor Tu (397 aa).

Residues 10 to 207 (LPHVNVGTIG…TLDSYIPEPV (198 aa)) enclose the tr-type G domain. A G1 region spans residues 19–26 (GHVDHGKT). 19-26 (GHVDHGKT) is a GTP binding site. Mg(2+) is bound at residue T26. The G2 stretch occupies residues 60–64 (GITIN). Positions 81-84 (DCPG) are G3. GTP is bound by residues 81 to 85 (DCPGH) and 136 to 139 (NKAD). The G4 stretch occupies residues 136 to 139 (NKAD). Residues 174–176 (SAR) form a G5 region.

Belongs to the TRAFAC class translation factor GTPase superfamily. Classic translation factor GTPase family. EF-Tu/EF-1A subfamily. In terms of assembly, monomer.

It localises to the cytoplasm. It catalyses the reaction GTP + H2O = GDP + phosphate + H(+). In terms of biological role, GTP hydrolase that promotes the GTP-dependent binding of aminoacyl-tRNA to the A-site of ribosomes during protein biosynthesis. The polypeptide is Elongation factor Tu (Pseudomonas syringae pv. syringae (strain B728a)).